A 335-amino-acid chain; its full sequence is Dihydroorotate dehydrogenase (quinone) (335 aa).

Residues 58 to 62 (AGADK) and T82 contribute to the FMN site. K62 provides a ligand contact to substrate. 107 to 111 (NRNGF) lines the substrate pocket. FMN-binding residues include N135 and N168. N168 is a binding site for substrate. Catalysis depends on S171, which acts as the Nucleophile. N173 serves as a coordination point for substrate. FMN contacts are provided by K213 and G241. Residue 242 to 243 (NT) coordinates substrate. FMN is bound by residues G264, G293, and 314–315 (YS).

Belongs to the dihydroorotate dehydrogenase family. Type 2 subfamily. As to quaternary structure, monomer. FMN serves as cofactor.

The protein localises to the cell membrane. The catalysed reaction is (S)-dihydroorotate + a quinone = orotate + a quinol. The protein operates within pyrimidine metabolism; UMP biosynthesis via de novo pathway; orotate from (S)-dihydroorotate (quinone route): step 1/1. Its function is as follows. Catalyzes the conversion of dihydroorotate to orotate with quinone as electron acceptor. This chain is Dihydroorotate dehydrogenase (quinone), found in Actinobacillus pleuropneumoniae serotype 3 (strain JL03).